We begin with the raw amino-acid sequence, 675 residues long: Regulator of G-protein signaling 9 (675 aa).

In terms of domain architecture, DEP spans 30–105; the sequence is PETGVRMHNQ…PDSSLYRFQT (76 aa). The G protein gamma domain maps to 222-283; that stretch reads VRKEIMYYQQ…DTQFWDLNAK (62 aa). Positions 299–414 constitute an RGS domain; the sequence is NFSELIRDPK…LKSPIYKEML (116 aa). Disordered regions lie at residues 524 to 571 and 637 to 662; these read RVAL…PPKA and DSGT…EKEV. A compositionally biased stretch (polar residues) spans 542–551; the sequence is SGANSGPSVT. Composition is skewed to basic and acidic residues over residues 552 to 562 and 646 to 662; these read ENREPSADHSR and DDPR…EKEV.

Heterodimer with GNB5. Interacts with RGS7BP, leading to regulate the subcellular location of the heterodimer formed with GNB5. Component of the RGS9-1-Gbeta5 complex composed of RGS9 (RGS9-1), Gbeta5 (GNB5) and RGS9BP. Interacts with PDE6G and GNAT1. In terms of processing, retinal isoform 1 is light-dependent phosphorylated at 'Ser-475'. Phosphorylation is decreased by light exposition. Interaction with RGS9BP is decreased when isoform 1 is phosphorylated at 'Ser-475'. Isoform 1 is expressed in photoreceptor outer segments. Isoform 2 is expressed in brain striatum.

It localises to the membrane. Its function is as follows. Inhibits signal transduction by increasing the GTPase activity of G protein alpha subunits thereby driving them into their inactive GDP-bound form. Binds to GNAT1. Involved in phototransduction; key element in the recovery phase of visual transduction. This Mus musculus (Mouse) protein is Regulator of G-protein signaling 9 (Rgs9).